Here is a 505-residue protein sequence, read N- to C-terminus: Putative diacyglycerol O-acyltransferase MT0919 (505 aa).

The Proton acceptor role is filled by histidine 167.

The protein belongs to the long-chain O-acyltransferase family.

It catalyses the reaction an acyl-CoA + a 1,2-diacyl-sn-glycerol = a triacyl-sn-glycerol + CoA. The protein operates within glycerolipid metabolism; triacylglycerol biosynthesis. This is Putative diacyglycerol O-acyltransferase MT0919 from Mycobacterium tuberculosis (strain CDC 1551 / Oshkosh).